The primary structure comprises 84 residues: Cell division protein CrgA (84 aa).

The next 2 helical transmembrane spans lie at 31–51 and 60–80; these read VAPV…VFYV and ALDN…FGVS.

The protein belongs to the CrgA family.

The protein resides in the cell membrane. Functionally, involved in cell division. Coordinates growth and cell division. Required for the formation of the sporulation septa. This Streptomyces avermitilis (strain ATCC 31267 / DSM 46492 / JCM 5070 / NBRC 14893 / NCIMB 12804 / NRRL 8165 / MA-4680) protein is Cell division protein CrgA.